A 407-amino-acid chain; its full sequence is Arginine biosynthesis bifunctional protein ArgJ (407 aa).

6 residues coordinate substrate: Thr155, Lys181, Thr192, Glu278, Asn402, and Thr407. Catalysis depends on Thr192, which acts as the Nucleophile.

Belongs to the ArgJ family. In terms of assembly, heterotetramer of two alpha and two beta chains.

The protein resides in the cytoplasm. It carries out the reaction N(2)-acetyl-L-ornithine + L-glutamate = N-acetyl-L-glutamate + L-ornithine. The enzyme catalyses L-glutamate + acetyl-CoA = N-acetyl-L-glutamate + CoA + H(+). It participates in amino-acid biosynthesis; L-arginine biosynthesis; L-ornithine and N-acetyl-L-glutamate from L-glutamate and N(2)-acetyl-L-ornithine (cyclic): step 1/1. It functions in the pathway amino-acid biosynthesis; L-arginine biosynthesis; N(2)-acetyl-L-ornithine from L-glutamate: step 1/4. Catalyzes two activities which are involved in the cyclic version of arginine biosynthesis: the synthesis of N-acetylglutamate from glutamate and acetyl-CoA as the acetyl donor, and of ornithine by transacetylation between N(2)-acetylornithine and glutamate. The sequence is that of Arginine biosynthesis bifunctional protein ArgJ from Thiobacillus denitrificans (strain ATCC 25259 / T1).